The primary structure comprises 175 residues: ATP synthase subunit b (175 aa).

Residues 22-42 form a helical membrane-spanning segment; sequence LNLLETNIINIAIVFGLLIFL.

The protein belongs to the ATPase B chain family. In terms of assembly, F-type ATPases have 2 components, F(1) - the catalytic core - and F(0) - the membrane proton channel. F(1) has five subunits: alpha(3), beta(3), gamma(1), delta(1), epsilon(1). F(0) has four main subunits: a(1), b(1), b'(1) and c(10-14). The alpha and beta chains form an alternating ring which encloses part of the gamma chain. F(1) is attached to F(0) by a central stalk formed by the gamma and epsilon chains, while a peripheral stalk is formed by the delta, b and b' chains.

Its subcellular location is the cell inner membrane. Its function is as follows. F(1)F(0) ATP synthase produces ATP from ADP in the presence of a proton or sodium gradient. F-type ATPases consist of two structural domains, F(1) containing the extramembraneous catalytic core and F(0) containing the membrane proton channel, linked together by a central stalk and a peripheral stalk. During catalysis, ATP synthesis in the catalytic domain of F(1) is coupled via a rotary mechanism of the central stalk subunits to proton translocation. Component of the F(0) channel, it forms part of the peripheral stalk, linking F(1) to F(0). This is ATP synthase subunit b from Gloeobacter violaceus (strain ATCC 29082 / PCC 7421).